A 328-amino-acid polypeptide reads, in one-letter code: Small ribosomal subunit protein bS1A (328 aa).

S1 motif domains are found at residues 31–100, 118–182, and 196–264; these read GDIV…LSIR, DATV…LSHR, and AQVV…LSTK. The interval 298–328 is disordered; sequence EAQGIPYEPPTSVDDTDDEEDESLAVSAVDE. Residues 311-328 show a composition bias toward acidic residues; the sequence is DDTDDEEDESLAVSAVDE.

It belongs to the bacterial ribosomal protein bS1 family.

Binds mRNA. In Synechocystis sp. (strain ATCC 27184 / PCC 6803 / Kazusa), this protein is Small ribosomal subunit protein bS1A (rps1A).